Consider the following 179-residue polypeptide: Large ribosomal subunit protein uL6 (179 aa).

It belongs to the universal ribosomal protein uL6 family. As to quaternary structure, part of the 50S ribosomal subunit.

Its function is as follows. This protein binds to the 23S rRNA, and is important in its secondary structure. It is located near the subunit interface in the base of the L7/L12 stalk, and near the tRNA binding site of the peptidyltransferase center. This is Large ribosomal subunit protein uL6 from Alkaliphilus metalliredigens (strain QYMF).